An 85-amino-acid chain; its full sequence is Large ribosomal subunit protein bL27 (85 aa).

A disordered region spans residues 1 to 21; it reads MAHKKAGGSTRNGRDSNAQRL. Polar residues predominate over residues 9–19; it reads STRNGRDSNAQ.

The protein belongs to the bacterial ribosomal protein bL27 family.

This chain is Large ribosomal subunit protein bL27, found in Pectobacterium carotovorum subsp. carotovorum (strain PC1).